The primary structure comprises 322 residues: Eukaryotic translation initiation factor 3 subunit I (322 aa).

WD repeat units lie at residues 4 to 43, 46 to 85, 141 to 180, 184 to 223, and 281 to 322; these read GHER…RLGT, GHQG…IIAS, MTES…KVVD, DHTA…CLKT, and GHFG…NIFE.

The protein belongs to the eIF-3 subunit I family. In terms of assembly, component of the eukaryotic translation initiation factor 3 (eIF-3) complex. The eIF-3 complex interacts with pix.

The protein resides in the cytoplasm. Component of the eukaryotic translation initiation factor 3 (eIF-3) complex, which is involved in protein synthesis of a specialized repertoire of mRNAs and, together with other initiation factors, stimulates binding of mRNA and methionyl-tRNAi to the 40S ribosome. The eIF-3 complex specifically targets and initiates translation of a subset of mRNAs involved in cell proliferation. The chain is Eukaryotic translation initiation factor 3 subunit I from Drosophila ananassae (Fruit fly).